The primary structure comprises 749 residues: Putative Xaa-Pro aminopeptidase FRA1 (749 aa).

A disordered region spans residues 1 to 33 (MTSKPSTSDGRAHSISHVPGTHMRGTSASHSPR). Phosphoserine occurs at positions 69, 92, and 95. Mn(2+) contacts are provided by Asp551, Asp562, Glu660, and Glu674.

Belongs to the peptidase M24B family. As to quaternary structure, homodimer. Interacts with FRA2. It depends on Mn(2+) as a cofactor.

It localises to the cytoplasm. The catalysed reaction is Release of any N-terminal amino acid, including proline, that is linked to proline, even from a dipeptide or tripeptide.. Involved in the regulation of the iron regulon in responss to decreased mitochondrial iron-sulfur cluster synthesis. The polypeptide is Putative Xaa-Pro aminopeptidase FRA1 (FRA1) (Saccharomyces cerevisiae (strain ATCC 204508 / S288c) (Baker's yeast)).